The chain runs to 261 residues: Ribonuclease PH (261 aa).

Phosphate contacts are provided by residues R88 and 126–128; that span reads GTR. The disordered stretch occupies residues 242 to 261; that stretch reads PYPGVLPEPKNPEPKKKFGA. Residues 251–261 show a composition bias toward basic and acidic residues; that stretch reads KNPEPKKKFGA.

It belongs to the RNase PH family. Homohexameric ring arranged as a trimer of dimers.

It carries out the reaction tRNA(n+1) + phosphate = tRNA(n) + a ribonucleoside 5'-diphosphate. Phosphorolytic 3'-5' exoribonuclease that plays an important role in tRNA 3'-end maturation. Removes nucleotide residues following the 3'-CCA terminus of tRNAs; can also add nucleotides to the ends of RNA molecules by using nucleoside diphosphates as substrates, but this may not be physiologically important. Probably plays a role in initiation of 16S rRNA degradation (leading to ribosome degradation) during starvation. In Rhodococcus erythropolis (strain PR4 / NBRC 100887), this protein is Ribonuclease PH.